An 82-amino-acid polypeptide reads, in one-letter code: Cytotoxin 6 (82 aa).

The first 21 residues, 1 to 21 (MKTLLLTLVVVTIVCLDLGYT), serve as a signal peptide directing secretion. 4 disulfide bridges follow: cysteine 24–cysteine 42, cysteine 35–cysteine 59, cysteine 63–cysteine 74, and cysteine 75–cysteine 80.

It belongs to the three-finger toxin family. Short-chain subfamily. Type IA cytotoxin sub-subfamily. As to quaternary structure, monomer in solution; Homodimer and oligomer in the presence of negatively charged lipids forming a pore with a size ranging between 20 and 30 Angstroms. As to expression, expressed by the venom gland.

The protein localises to the secreted. The protein resides in the target cell membrane. Functionally, shows cytolytic activity on many different cells by forming pore in lipid membranes. In vivo, increases heart rate or kills the animal by cardiac arrest. In addition, it binds to heparin with high affinity, interacts with Kv channel-interacting protein 1 (KCNIP1) in a calcium-independent manner, and binds to integrin alpha-V/beta-3 (ITGAV/ITGB3) with moderate affinity. The protein is Cytotoxin 6 of Naja atra (Chinese cobra).